The primary structure comprises 527 residues: Probable glucomannan 4-beta-mannosyltransferase 9 (527 aa).

A helical membrane pass occupies residues 37–59; the sequence is AMSVMLFVEKVYMSVVLVGVHLF. Aspartate 131 is an active-site residue. 2 residues coordinate substrate: aspartate 190 and aspartate 192. Aspartate 284 is an active-site residue. Helical transmembrane passes span 363–383, 399–419, 478–498, and 505–525; these read IIGH…TVLI, IVTI…IFWV, ALEL…IAYG, and FLFL…GTIV.

This sequence belongs to the glycosyltransferase 2 family. Plant cellulose synthase-like A subfamily.

Its subcellular location is the golgi apparatus membrane. The catalysed reaction is GDP-mannose + (glucomannan)n = GDP + (glucomannan)n+1.. In terms of biological role, probable mannan synthase which consists of a 4-beta-mannosyltransferase activity on mannan using GDP-mannose. The beta-1,4-mannan product is the backbone for galactomannan synthesis by galactomannan galactosyltransferase. Galactomannan is a noncellulosic polysaccharides of plant cell wall. The protein is Probable glucomannan 4-beta-mannosyltransferase 9 of Oryza sativa subsp. japonica (Rice).